The chain runs to 277 residues: Large ribosomal subunit protein uL2 (277 aa).

Disordered regions lie at residues 36–58 (PLHKKGGRNNQGKLTVRHQGGGH) and 219–277 (TVRG…RKNK). A compositionally biased stretch (basic residues) spans 258-277 (KTRKKKNKSDKFIVRRRKNK).

The protein belongs to the universal ribosomal protein uL2 family. As to quaternary structure, part of the 50S ribosomal subunit. Forms a bridge to the 30S subunit in the 70S ribosome.

Functionally, one of the primary rRNA binding proteins. Required for association of the 30S and 50S subunits to form the 70S ribosome, for tRNA binding and peptide bond formation. It has been suggested to have peptidyltransferase activity; this is somewhat controversial. Makes several contacts with the 16S rRNA in the 70S ribosome. The sequence is that of Large ribosomal subunit protein uL2 from Bacillus velezensis (strain DSM 23117 / BGSC 10A6 / LMG 26770 / FZB42) (Bacillus amyloliquefaciens subsp. plantarum).